Here is a 592-residue protein sequence, read N- to C-terminus: Condensin-2 complex subunit H2 (592 aa).

Disordered stretches follow at residues 89–116 (NKKR…DGCE) and 261–285 (EAPS…PKQL). Residues 96-108 (GSSSDGNQEQAPS) are compositionally biased toward polar residues.

The protein belongs to the CND2 H2 (condensin-2 subunit 2) family. In terms of assembly, component of the condensin-2 complex, which contains the smc2 and smc4 heterodimer, and three non SMC subunits, ncapg2, ncaph2 and ncapd3 that probably regulate the complex.

It is found in the nucleus. Its function is as follows. Regulatory subunit of the condensin-2 complex, a complex that seems to provide chromosomes with an additional level of organization and rigidity and in establishing mitotic chromosome architecture. The chain is Condensin-2 complex subunit H2 (ncaph2) from Danio rerio (Zebrafish).